The following is a 361-amino-acid chain: Queuine tRNA-ribosyltransferase (361 aa).

The active-site Proton acceptor is the aspartate 92. Substrate is bound by residues 92-96 (DSGGF), aspartate 146, glutamine 189, and glycine 216. Positions 247–253 (GVGKPAD) are RNA binding. Aspartate 266 functions as the Nucleophile in the catalytic mechanism. Residues 271-275 (TRSGR) form an RNA binding; important for wobble base 34 recognition region. Cysteine 304, cysteine 306, cysteine 309, and histidine 335 together coordinate Zn(2+).

Belongs to the queuine tRNA-ribosyltransferase family. In terms of assembly, homodimer. Within each dimer, one monomer is responsible for RNA recognition and catalysis, while the other monomer binds to the replacement base PreQ1. The cofactor is Zn(2+).

It carries out the reaction 7-aminomethyl-7-carbaguanine + guanosine(34) in tRNA = 7-aminomethyl-7-carbaguanosine(34) in tRNA + guanine. It participates in tRNA modification; tRNA-queuosine biosynthesis. Functionally, catalyzes the base-exchange of a guanine (G) residue with the queuine precursor 7-aminomethyl-7-deazaguanine (PreQ1) at position 34 (anticodon wobble position) in tRNAs with GU(N) anticodons (tRNA-Asp, -Asn, -His and -Tyr). Catalysis occurs through a double-displacement mechanism. The nucleophile active site attacks the C1' of nucleotide 34 to detach the guanine base from the RNA, forming a covalent enzyme-RNA intermediate. The proton acceptor active site deprotonates the incoming PreQ1, allowing a nucleophilic attack on the C1' of the ribose to form the product. After dissociation, two additional enzymatic reactions on the tRNA convert PreQ1 to queuine (Q), resulting in the hypermodified nucleoside queuosine (7-(((4,5-cis-dihydroxy-2-cyclopenten-1-yl)amino)methyl)-7-deazaguanosine). The protein is Queuine tRNA-ribosyltransferase of Rickettsia canadensis (strain McKiel).